Here is a 462-residue protein sequence, read N- to C-terminus: Chitinase 1 (462 aa).

The first 17 residues, 1–17 (MILNLIILLAISIVASA), serve as a signal peptide directing secretion. The 274-residue stretch at 18-291 (SNIAAYWGQN…NQLYQALSGS (274 aa)) folds into the GH18 domain. N-linked (GlcNAc...) asparagine glycosylation is present at Asn-57. The active-site Proton donor is Glu-147.

This sequence belongs to the glycosyl hydrolase 18 family. Chitinase class III subfamily.

Its subcellular location is the secreted. It catalyses the reaction Random endo-hydrolysis of N-acetyl-beta-D-glucosaminide (1-&gt;4)-beta-linkages in chitin and chitodextrins.. The chain is Chitinase 1 (CHT1) from Candida albicans (Yeast).